Here is a 215-residue protein sequence, read N- to C-terminus: MPGEATETVPVTEQEMQQPQVETGSGTESDSDDSVPELEEQDSAQTQTQQAQLAAAAEIDEEPVSKAKQSRSEKKARKAMSKLGLRQVTGVTRVTIRKSKNILFVITKPDVYKSPASDTYIVFGEAKIEDLSQQAQLAAAEKFKVPGETVSNVQENTQTPTVQEESEEEEVDETGVEVKDIELVMSQANVSRAKAVRALKNNNNDIVNAIMELTM.

The interval 1–81 (MPGEATETVP…SEKKARKAMS (81 aa)) is disordered. Residues 9–21 (VPVTEQEMQQPQV) are compositionally biased toward polar residues. Positions 29–42 (SDSDDSVPELEEQD) are enriched in acidic residues. Residues 43–57 (SAQTQTQQAQLAAAA) show a composition bias toward low complexity. Residues 70-135 (SRSEKKARKA…AKIEDLSQQA (66 aa)) form the NAC-A/B domain. Residues 176–213 (VEVKDIELVMSQANVSRAKAVRALKNNNNDIVNAIMEL) form the UBA domain.

This sequence belongs to the NAC-alpha family.

Functionally, may promote appropriate targeting of ribosome-nascent polypeptide complexes. This chain is Nascent polypeptide-associated complex subunit alpha (naca), found in Oreochromis niloticus (Nile tilapia).